Consider the following 466-residue polypeptide: UDP-N-acetylmuramate--L-alanine ligase (466 aa).

119–125 provides a ligand contact to ATP; sequence GTHGKTT.

This sequence belongs to the MurCDEF family.

Its subcellular location is the cytoplasm. It carries out the reaction UDP-N-acetyl-alpha-D-muramate + L-alanine + ATP = UDP-N-acetyl-alpha-D-muramoyl-L-alanine + ADP + phosphate + H(+). It functions in the pathway cell wall biogenesis; peptidoglycan biosynthesis. In terms of biological role, cell wall formation. The polypeptide is UDP-N-acetylmuramate--L-alanine ligase (Cytophaga hutchinsonii (strain ATCC 33406 / DSM 1761 / CIP 103989 / NBRC 15051 / NCIMB 9469 / D465)).